The following is a 256-amino-acid chain: HTH-type transcriptional regulator PrtR (256 aa).

Positions 16–69 (LKQAMAMRNLKQETLAEAAGVSQNTIHKLTSGKAQSTRKLIEIAAALGVSPVWL) constitute an HTH cro/C1-type domain. Residues 27-46 (QETLAEAAGVSQNTIHKLTS) constitute a DNA-binding region (H-T-H motif).

Functionally, represses the promoter activity of the prtN gene. In Pseudomonas aeruginosa (strain ATCC 15692 / DSM 22644 / CIP 104116 / JCM 14847 / LMG 12228 / 1C / PRS 101 / PAO1), this protein is HTH-type transcriptional regulator PrtR (prtR).